The following is a 586-amino-acid chain: Asparagine synthetase, nodule [glutamine-hydrolyzing] (586 aa).

Cys2 serves as the catalytic For GATase activity. The Glutamine amidotransferase type-2 domain maps to Cys2 to Arg185. L-glutamine is bound by residues Arg50–Val54, Asn75–Glu77, and Asp98. One can recognise an Asparagine synthetase domain in the interval Pro193 to Pro517. ATP contacts are provided by residues Leu232, Val268, and Ser342–Gly343.

As to expression, root nodules.

The enzyme catalyses L-aspartate + L-glutamine + ATP + H2O = L-asparagine + L-glutamate + AMP + diphosphate + H(+). It participates in amino-acid biosynthesis; L-asparagine biosynthesis; L-asparagine from L-aspartate (L-Gln route): step 1/1. The polypeptide is Asparagine synthetase, nodule [glutamine-hydrolyzing] (AS1) (Pisum sativum (Garden pea)).